The sequence spans 407 residues: Glucose-1-phosphate adenylyltransferase 2 (407 aa).

Alpha-D-glucose 1-phosphate-binding positions include Tyr-97, Gly-162, 177-178 (EK), and Ser-195.

Belongs to the bacterial/plant glucose-1-phosphate adenylyltransferase family. As to quaternary structure, homotetramer.

It carries out the reaction alpha-D-glucose 1-phosphate + ATP + H(+) = ADP-alpha-D-glucose + diphosphate. The protein operates within glycan biosynthesis; glycogen biosynthesis. Functionally, involved in the biosynthesis of ADP-glucose, a building block required for the elongation reactions to produce glycogen. Catalyzes the reaction between ATP and alpha-D-glucose 1-phosphate (G1P) to produce pyrophosphate and ADP-Glc. This chain is Glucose-1-phosphate adenylyltransferase 2, found in Vibrio cholerae serotype O1 (strain ATCC 39315 / El Tor Inaba N16961).